We begin with the raw amino-acid sequence, 414 residues long: 25-hydroxycholesterol 7-alpha-hydroxylase (414 aa).

Cys354 is a heme binding site.

The protein belongs to the cytochrome P450 family. Heme serves as cofactor. In terms of tissue distribution, highly expressed in brain; also expressed in liver and kidney.

It localises to the endoplasmic reticulum membrane. Its subcellular location is the microsome membrane. It catalyses the reaction 25-hydroxycholesterol + reduced [NADPH--hemoprotein reductase] + O2 = 7alpha,25-dihydroxycholesterol + oxidized [NADPH--hemoprotein reductase] + H2O + H(+). The catalysed reaction is (25R)-cholest-5-ene-3beta,26-diol + reduced [NADPH--hemoprotein reductase] + O2 = (25R)-cholest-5-en-3beta,7alpha,26-triol + oxidized [NADPH--hemoprotein reductase] + H2O + H(+). It functions in the pathway lipid metabolism; bile acid biosynthesis. In terms of biological role, oxysterol 7alpha-hydroxylase that mediates formation of 7-alpha,25-dihydroxycholesterol (7-alpha,25-OHC) from 25-hydroxycholesterol. Plays a key role in cell positioning and movement in lymphoid tissues: 7-alpha,25-dihydroxycholesterol (7-alpha,25-OHC) acts as a ligand for the G protein-coupled receptor GPR183/EBI2, a chemotactic receptor for a number of lymphoid cells. The sequence is that of 25-hydroxycholesterol 7-alpha-hydroxylase (Cyp7b1) from Rattus norvegicus (Rat).